A 315-amino-acid polypeptide reads, in one-letter code: Methionyl-tRNA formyltransferase (315 aa).

Residue 107-110 (SLLP) coordinates (6S)-5,6,7,8-tetrahydrofolate.

This sequence belongs to the Fmt family.

The enzyme catalyses L-methionyl-tRNA(fMet) + (6R)-10-formyltetrahydrofolate = N-formyl-L-methionyl-tRNA(fMet) + (6S)-5,6,7,8-tetrahydrofolate + H(+). Its function is as follows. Attaches a formyl group to the free amino group of methionyl-tRNA(fMet). The formyl group appears to play a dual role in the initiator identity of N-formylmethionyl-tRNA by promoting its recognition by IF2 and preventing the misappropriation of this tRNA by the elongation apparatus. The chain is Methionyl-tRNA formyltransferase from Borreliella afzelii (strain PKo) (Borrelia afzelii).